The sequence spans 284 residues: MLIIETLPMLRREVRRWRQDGKRVALVPTMGNLHDGHMTLVDEARERADIVIVSIFVNPMQFERADDLARYPRTLQEDCEKLNRRGVDLVFSPAPADIYPHGVDGQTFVDVPSLSTLLEGASRPGHFRGVSTIVSKLFNLVQPDLACFGEKDYQQLALIRKMVADMGYDIDIIGVPTVRAKDGLALSSRNGYLTAEERKIAPLLSKVMQQIAERLGQGERHVEEMMISAENTLAENGLRADGLAIVDADTLLPLNVDSQRAVILMAAWLGKARLIDNQQVDLTQ.

Position 30 to 37 (30 to 37 (MGNLHDGH)) interacts with ATP. The active-site Proton donor is histidine 37. Glutamine 61 provides a ligand contact to (R)-pantoate. Glutamine 61 is a beta-alanine binding site. 149-152 (GEKD) serves as a coordination point for ATP. A (R)-pantoate-binding site is contributed by glutamine 155. Residues valine 178 and 186–189 (LSSR) each bind ATP.

Belongs to the pantothenate synthetase family. Homodimer.

It localises to the cytoplasm. The catalysed reaction is (R)-pantoate + beta-alanine + ATP = (R)-pantothenate + AMP + diphosphate + H(+). Its pathway is cofactor biosynthesis; (R)-pantothenate biosynthesis; (R)-pantothenate from (R)-pantoate and beta-alanine: step 1/1. Its function is as follows. Catalyzes the condensation of pantoate with beta-alanine in an ATP-dependent reaction via a pantoyl-adenylate intermediate. The chain is Pantothenate synthetase from Erwinia tasmaniensis (strain DSM 17950 / CFBP 7177 / CIP 109463 / NCPPB 4357 / Et1/99).